The chain runs to 394 residues: Fatty acid resistance protein FarA (394 aa).

The disordered stretch occupies residues 1–23; that stretch reads MKSGNSEPNLMETHTDETKLQNT. The chain crosses the membrane as a helical span at residues 33-53; that stretch reads ALTLLFALSAAAAGSAFFLWW. A disordered region spans residues 356–376; sequence SAAGAPVSKTPGAALPEMEST.

This sequence belongs to the membrane fusion protein (MFP) (TC 8.A.1) family. As to quaternary structure, probably part of a tripartite efflux system FarAB-MtrE, which is composed of an inner membrane transporter, FarB, a periplasmic membrane fusion protein, FarA, and an outer membrane component, MtrE.

Its subcellular location is the cell inner membrane. Functionally, mediates resistance to long-chained antibacterial fatty acids (FAs). Function is dependent on the MtrE outer membrane protein. The chain is Fatty acid resistance protein FarA from Neisseria gonorrhoeae.